The sequence spans 312 residues: Retron Ec83 reverse transcriptase (312 aa).

The Reverse transcriptase domain occupies 14-239 (PDFDVLLKSR…HNRHVTGVTL (226 aa)). Positions 97, 185, and 186 each coordinate Mg(2+).

It belongs to the bacterial reverse transcriptase family.

The catalysed reaction is DNA(n) + a 2'-deoxyribonucleoside 5'-triphosphate = DNA(n+1) + diphosphate. Its function is as follows. Reverse transcriptase (RT) component of antiviral defense system retron Ec83, composed of a non-coding RNA (ncRNA), this reverse transcriptase (RT), a probable ATPase and a putative HNH endonuclease. Expression of retron Ec83 confers protection against bacteriophages T2, T4 and T6. At multiplicity of infection (MOI) of 0.02 cultures slow growth when infected with T4 but do not collapse, at MOI 2 cultures enter growth stasis. Responsible for synthesis of msDNA-Ec83 (a linear ssDNA with a 5'-terminal phosphate residue). Unlike most known msDNAs the mature product from the original strain does not have an RNA component. When the ncRNA plus RT are expressed in strain K12 / JM109 only linear DNA is seen in stationary phase cells, but logarithmic phase cells have both a linear and branched msDNA (a branched molecule with RNA linked by a 2',5'-phosphodiester bond to ssDNA, a 'classic' retron). The branched msDNA is probably the precursor for the mature linear msDNA, the precursor is cleaved endonucleolytically by ExoVII (xseA-xseB) leaving the observed mature 5'-phosphate ssDNA terminus. The retron transcript serves as primer (from a conserved internal G residue) and template for the reaction, and codes for the RT. Overexpression of the ncRNA and RT, which leads to increased levels of msDNA, is mutagenic in vivo. This may be due to a mismatch in the msDNA stem which binds and sequesters MutS and/or MutL. The protein is Retron Ec83 reverse transcriptase of Escherichia coli.